The primary structure comprises 257 residues: 5'-nucleotidase SurE (257 aa).

A divalent metal cation is bound by residues D8, D9, S40, and N92.

The protein belongs to the SurE nucleotidase family. The cofactor is a divalent metal cation.

It localises to the cytoplasm. The catalysed reaction is a ribonucleoside 5'-phosphate + H2O = a ribonucleoside + phosphate. Its function is as follows. Nucleotidase that shows phosphatase activity on nucleoside 5'-monophosphates. This is 5'-nucleotidase SurE from Rhizobium leguminosarum bv. trifolii (strain WSM2304).